Here is a 154-residue protein sequence, read N- to C-terminus: Ribosome maturation factor RimP (154 aa).

It belongs to the RimP family.

The protein localises to the cytoplasm. Its function is as follows. Required for maturation of 30S ribosomal subunits. In Salmonella agona (strain SL483), this protein is Ribosome maturation factor RimP.